The chain runs to 246 residues: tRNA (guanine-N(1)-)-methyltransferase (246 aa).

S-adenosyl-L-methionine contacts are provided by residues Gly113 and 133-138 (IGDYVL).

This sequence belongs to the RNA methyltransferase TrmD family. As to quaternary structure, homodimer.

The protein resides in the cytoplasm. The enzyme catalyses guanosine(37) in tRNA + S-adenosyl-L-methionine = N(1)-methylguanosine(37) in tRNA + S-adenosyl-L-homocysteine + H(+). Functionally, specifically methylates guanosine-37 in various tRNAs. This is tRNA (guanine-N(1)-)-methyltransferase from Haemophilus influenzae (strain 86-028NP).